We begin with the raw amino-acid sequence, 597 residues long: Fructan 1-exohydrolase w1 (597 aa).

Residues 1–20 form the signal peptide; that stretch reads MAQAWAFLLPVLVFGSYVTS. Residue aspartate 76 is part of the active site. N-linked (GlcNAc...) asparagine glycosylation is found at asparagine 169, asparagine 237, and asparagine 249. Cysteine 447 and cysteine 493 form a disulfide bridge. Asparagine 568 is a glycosylation site (N-linked (GlcNAc...) asparagine).

It belongs to the glycosyl hydrolase 32 family.

The catalysed reaction is Hydrolysis of terminal, non-reducing (2-&gt;1)-linked beta-D-fructofuranose residues in fructans.. Its activity is regulated as follows. Inhibited by sucrose. Hydrolyzes inulin-type beta-(2,1)-fructans and beta-(2,1)-linkages in branched fructans. Has low activity against beta-(2,6)-linked fructans. May play a role as a beta-(2,1)-trimmer during graminan biosynthesis. The chain is Fructan 1-exohydrolase w1 from Triticum aestivum (Wheat).